The sequence spans 427 residues: Trigger factor (427 aa).

One can recognise a PPIase FKBP-type domain in the interval 163-248 (GDTVVIDFVG…IHEVKAKEVP (86 aa)).

Belongs to the FKBP-type PPIase family. Tig subfamily.

The protein resides in the cytoplasm. It catalyses the reaction [protein]-peptidylproline (omega=180) = [protein]-peptidylproline (omega=0). Functionally, involved in protein export. Acts as a chaperone by maintaining the newly synthesized protein in an open conformation. Functions as a peptidyl-prolyl cis-trans isomerase. The chain is Trigger factor from Streptococcus pneumoniae serotype 4 (strain ATCC BAA-334 / TIGR4).